A 168-amino-acid chain; its full sequence is DAZ-associated protein 2 (168 aa).

A compositionally biased stretch (low complexity) spans 1–13 (MNSKGQYPTQPTY). The disordered stretch occupies residues 1–25 (MNSKGQYPTQPTYPVQPPGNPVYPQ). Residues 39 to 42 (PPAY) carry the PPAY motif. Ser-77 carries the phosphoserine modification.

As to quaternary structure, interacts with SOX6. Interacts with DAZ1 and DAZL. Interacts with IL17RB. May interact with FAM168B. Interacts with INCA1. Interacts with EIF4G1 and EIF4G2. Interacts (via PPAY motif) with NEDD4 (via WW domains). Interacts with transcription factor TCF4; the interaction results in localization of DAZAP2 to the nucleus. Interacts with transcription factors TCF7 and TCF7L1. Interacts with transcription factor LEF1. Interacts with serine/threonine-protein kinase HIPK2; the interaction results in phosphorylation of DAZAP2 which causes localization of DAZAP2 to the nucleus, reduces interaction of DAZAP2 with HIPK2 and prevents DAZAP2-dependent degradation of HIPK2. Interacts with ubiquitin ligase SIAH1; the interaction is decreased following phosphorylation of DAZAP2 by HIPK2. Interacts with TP53; the interaction is triggered by DNA damage. In terms of processing, ubiquitinated by SMURF2, leading to proteasomal degradation. Ubiquitinated by NEDD4, leading to proteasomal degradation. Following DNA damage, phosphorylated by HIPK2 which promotes DAZAP2 localization to the nucleus, reduces interaction of DAZAP2 with HIPK2 and SIAH1, and prevents DAZAP2-dependent ubiquitination of HIPK2 by E3 ubiquitin-protein ligase SIAH1 and subsequent HIPK2 proteasomal degradation. In terms of tissue distribution, widely expressed. Highly expressed in brain.

The protein resides in the cytoplasm. It localises to the nucleus. It is found in the nucleus speckle. Its subcellular location is the nuclear body. The protein localises to the stress granule. Its function is as follows. In unstressed cells, promotes SIAH1-mediated polyubiquitination and degradation of the serine/threonine-protein kinase HIPK2, probably by acting as a loading factor that potentiates complex formation between HIPK2 and ubiquitin ligase SIAH1. In response to DNA damage, localizes to the nucleus following phosphorylation by HIPK2 and modulates the expression of a subset of TP53/p53 target genes by binding to TP53 at target gene promoters. This limits the expression of a number of cell death-mediating TP53 target genes, reducing DNA damage-induced cell death. Enhances the binding of transcription factor TCF7L2/TCF4, a Wnt signaling pathway effector, to the promoters of target genes. Plays a role in stress granule formation. The protein is DAZ-associated protein 2 (Dazap2) of Mus musculus (Mouse).